A 383-amino-acid chain; its full sequence is Odorant receptor 94b (383 aa).

The Cytoplasmic segment spans residues 1–41; the sequence is MESTNRLSAIQTLLVIQRWIGLLKWENEGEDGVLTWLKRIY. Residues 42-62 traverse the membrane as a helical segment; it reads PFVLHLPLTFTYIALMWYEAI. The Extracellular portion of the chain corresponds to 63–70; sequence TSSDFEEA. The helical transmembrane segment at 71-91 threads the bilayer; that stretch reads GQVLYMSITELALVTKLLNIW. Topologically, residues 92–130 are cytoplasmic; sequence YRRHEAASLIHELQHDPAFNLRNSEEIKFWQQNQRNFKR. The helical transmembrane segment at 131–151 threads the bilayer; that stretch reads IFYWYIWGSLFVAVMGYISVF. The Extracellular segment spans residues 152–174; it reads FQEDYELPFGYYVPFEWRTRERY. A helical membrane pass occupies residues 175 to 195; it reads FYAWGYNVVAMTLCCLSNILL. The Cytoplasmic segment spans residues 196–250; the sequence is DTLGCYFMFHIASLFRLLGMRLEALKNAAEEKARPELRRIFQLHTKVRRLTRECE. A helical transmembrane segment spans residues 251–271; sequence VLVSPYVLSQVVFSAFIICFS. Residues 272-284 are Extracellular-facing; that stretch reads AYRLVHMGFKQRP. A helical membrane pass occupies residues 285 to 305; that stretch reads GLFVTTVQFVAVMIVQIFLPC. Residues 306 to 358 are Cytoplasmic-facing; it reads YYGNELTFHANALTNSVFGTNWLEYSVGTRKLLNCYMEFLKRPVKVRAGVFFE. The helical transmembrane segment at 359–379 threads the bilayer; that stretch reads IGLPIFVKTINNAYSFFALLL. Topologically, residues 380 to 383 are extracellular; it reads KISK.

It belongs to the insect chemoreceptor superfamily. Heteromeric odorant receptor channel (TC 1.A.69) family. Or2a subfamily. In terms of assembly, interacts with Orco. Complexes exist early in the endomembrane system in olfactory sensory neurons (OSNs), coupling these complexes to the conserved ciliary trafficking pathway.

It is found in the cell membrane. Functionally, odorant receptor which mediates acceptance or avoidance behavior, depending on its substrates. The odorant receptor repertoire encodes a large collection of odor stimuli that vary widely in identity, intensity, and duration. May form a complex with Orco to form odorant-sensing units, providing sensitive and prolonged odorant signaling and calcium permeability. The polypeptide is Odorant receptor 94b (Or94b) (Drosophila melanogaster (Fruit fly)).